The chain runs to 453 residues: Serine/threonine-protein phosphatase 2A regulatory subunit B'' subunit gamma (453 aa).

EF-hand domains are found at residues 273–308 (PSAL…TMTN) and 341–376 (KEPA…IQEL). Aspartate 286, aspartate 288, asparagine 290, methionine 292, and glutamate 297 together coordinate Ca(2+).

In terms of assembly, interacts with MCM3AP/GANP, PPP5C, and the phosphatase 2A core enzyme composed of the PPP2CA catalytic subunit and the constant regulatory subunit PPP2R1A. Finds in a complex with ABCB1, TFPI2 and PPP2R3C; leading to the dephosphorylation of ABCB1. Expressed in all tissues tested including heart, brain, spleen, thymus, lung, liver, kidney and testis.

The protein localises to the nucleus. Its subcellular location is the cytoplasm. May regulate MCM3AP phosphorylation through phosphatase recruitment. May act as a negative regulator of ABCB1 expression and function through the dephosphorylation of ABCB1 by TFPI2/PPP2R3C complex. May play a role in the activation-induced cell death of B-cells. This chain is Serine/threonine-protein phosphatase 2A regulatory subunit B'' subunit gamma (Ppp2r3c), found in Mus musculus (Mouse).